We begin with the raw amino-acid sequence, 80 residues long: Serine palmitoyltransferase small subunit B (80 aa).

Topologically, residues 1–11 are cytoplasmic; that stretch reads MDMKNMREYMS. A helical transmembrane segment spans residues 12–29; that stretch reads WLYYQYLLITGIYVLEPW. The Lumenal portion of the chain corresponds to 30-36; the sequence is EQSIFNT. The helical transmembrane segment at 37 to 57 threads the bilayer; that stretch reads VLFTMVAMVIYTSYVFVPIHV. At 58–80 the chain is on the cytoplasmic side; the sequence is RLALEFFCELVGGQPESTVALMT.

This sequence belongs to the SPTSS family. SPTSSB subfamily. Component of the serine palmitoyltransferase (SPT) complex, which is composed of SPTLC1, SPTLC2 or SPTLC3 and SPTSSA or SPTSSB. The heterodimer consisting of SPTLC1 and SPTLC2/SPTLC3 forms the catalytic core of the enzyme, while SPTSSA or SPTSSB subunits determine substrate specificity. SPT also interacts with ORMDL proteins, especially ORMDL3, which negatively regulate SPT activity in the presence of ceramides.

The protein resides in the endoplasmic reticulum membrane. It functions in the pathway lipid metabolism; sphingolipid metabolism. Component of the serine palmitoyltransferase multisubunit enzyme (SPT) that catalyzes the initial and rate-limiting step in sphingolipid biosynthesis by condensing L-serine and activated acyl-CoA (most commonly palmitoyl-CoA) to form long-chain bases. The SPT complex is composed of SPTLC1, SPTLC2 or SPTLC3 and SPTSSA or SPTSSB. Within this complex, the heterodimer consisting of SPTLC1 and SPTLC2/SPTLC3 forms the catalytic core. Within the SPT complex, SPTSSB stimulates the catalytic activity and plays a role in substrate specificity. SPT complexes with this subunit showing a preference for longer acyl-CoAs. The SPTLC1-SPTLC2-SPTSSB complex shows a strong preference for C18-CoA substrate, while the SPTLC1-SPTLC3-SPTSSB isozyme displays an ability to use a broader range of acyl-CoAs, without apparent preference. This Danio rerio (Zebrafish) protein is Serine palmitoyltransferase small subunit B (sptssb).